Consider the following 417-residue polypeptide: MFSKQDQIQGYDDALLSAMNAEEQRQEDHIELIASENYTSKRVMQAQGSGLTNKYAEGYPGKRYYGGCEHVDKVEQLAIERARQLFGADYANVQPHSGSQANAAVYLALLQAGDTVLGMSLAHGGHLTHGAKVSFSGKLYNAVQYGIDTTTGLIDYDEVERIAVECQPKMLIAGFSAYSKTLDFPRFRAIADKVGAYLFVDMAHVAGLVAAGLYPNPLPYADVVTTTTHKTLRGPRGGLILAKANEELEKKFNSAVFPGGQGGPLMHVIAAKAVCFKEAMEPGFKTYQQQVIDNAQAMAQVFITRGFDVVSGGTDNHLFLVSLIRQGLTGKEADAALGRAHITVNKNSVPNDPQSPFVTSGLRIGTPAVTTRGFKVTQCIELAGWICDILDNLGAADVEANVASQVAALCADFPVYR.

Residues Leu121 and 125–127 each bind (6S)-5,6,7,8-tetrahydrofolate; that span reads GHL. An N6-(pyridoxal phosphate)lysine modification is found at Lys230. Residue 355-357 coordinates (6S)-5,6,7,8-tetrahydrofolate; sequence SPF.

This sequence belongs to the SHMT family. Homodimer. Requires pyridoxal 5'-phosphate as cofactor.

It is found in the cytoplasm. The catalysed reaction is (6R)-5,10-methylene-5,6,7,8-tetrahydrofolate + glycine + H2O = (6S)-5,6,7,8-tetrahydrofolate + L-serine. The protein operates within one-carbon metabolism; tetrahydrofolate interconversion. Its pathway is amino-acid biosynthesis; glycine biosynthesis; glycine from L-serine: step 1/1. Functionally, catalyzes the reversible interconversion of serine and glycine with tetrahydrofolate (THF) serving as the one-carbon carrier. This reaction serves as the major source of one-carbon groups required for the biosynthesis of purines, thymidylate, methionine, and other important biomolecules. Also exhibits THF-independent aldolase activity toward beta-hydroxyamino acids, producing glycine and aldehydes, via a retro-aldol mechanism. This chain is Serine hydroxymethyltransferase 1, found in Pseudomonas syringae pv. tomato (strain ATCC BAA-871 / DC3000).